Reading from the N-terminus, the 363-residue chain is Protein RecA (363 aa).

66 to 73 (GPESSGKT) lines the ATP pocket. The tract at residues 327–363 (YGIDEKSIADRENPEKIKEKREETSEENKTDNSEKTK) is disordered. Over residues 329–363 (IDEKSIADRENPEKIKEKREETSEENKTDNSEKTK) the composition is skewed to basic and acidic residues.

Belongs to the RecA family.

The protein localises to the cytoplasm. Its function is as follows. Can catalyze the hydrolysis of ATP in the presence of single-stranded DNA, the ATP-dependent uptake of single-stranded DNA by duplex DNA, and the ATP-dependent hybridization of homologous single-stranded DNAs. It interacts with LexA causing its activation and leading to its autocatalytic cleavage. The sequence is that of Protein RecA from Lactobacillus acidophilus (strain ATCC 700396 / NCK56 / N2 / NCFM).